Here is a 180-residue protein sequence, read N- to C-terminus: Ribulose bisphosphate carboxylase small subunit, chloroplastic 2 (180 aa).

Residues 1 to 56 constitute a chloroplast transit peptide; the sequence is MASMISSSAVTTVSRASRGQSAAVAPFGGLKSMTGFPVKKVNTDITSITSNGGRVK.

It belongs to the RuBisCO small chain family. Heterohexadecamer of 8 large and 8 small subunits.

It is found in the plastid. It localises to the chloroplast. RuBisCO catalyzes two reactions: the carboxylation of D-ribulose 1,5-bisphosphate, the primary event in carbon dioxide fixation, as well as the oxidative fragmentation of the pentose substrate. Both reactions occur simultaneously and in competition at the same active site. Although the small subunit is not catalytic it is essential for maximal activity. This is Ribulose bisphosphate carboxylase small subunit, chloroplastic 2 from Pisum sativum (Garden pea).